The primary structure comprises 110 residues: Histone H2A.1 (110 aa).

Belongs to the histone H2A family. As to quaternary structure, the nucleosome is a histone octamer containing two molecules each of H2A, H2B, H3 and H4 assembled in one H3-H4 heterotetramer and two H2A-H2B heterodimers. The octamer wraps approximately 147 bp of DNA. In terms of tissue distribution, expressed in the generative cell within the bicellular pollen. Not detected in other reproductive or vegetative tissues.

Its subcellular location is the nucleus. It is found in the chromosome. Its function is as follows. Core component of nucleosome. Nucleosomes wrap and compact DNA into chromatin, limiting DNA accessibility to the cellular machineries which require DNA as a template. Histones thereby play a central role in transcription regulation, DNA repair, DNA replication and chromosomal stability. DNA accessibility is regulated via a complex set of post-translational modifications of histones, also called histone code, and nucleosome remodeling. This Lilium longiflorum (Trumpet lily) protein is Histone H2A.1 (gcH2A).